Consider the following 131-residue polypeptide: Small ribosomal subunit protein uS8 (131 aa).

The protein belongs to the universal ribosomal protein uS8 family. In terms of assembly, part of the 30S ribosomal subunit. Contacts proteins S5 and S12.

Its function is as follows. One of the primary rRNA binding proteins, it binds directly to 16S rRNA central domain where it helps coordinate assembly of the platform of the 30S subunit. This is Small ribosomal subunit protein uS8 from Parabacteroides distasonis (strain ATCC 8503 / DSM 20701 / CIP 104284 / JCM 5825 / NCTC 11152).